The primary structure comprises 126 residues: MTRIRRGYIARRRRTKIRLFASSFRGAHSRLTRTITQQKIRALVSAHRDRDKQKINFRRLWITRINAAIRERGVCYSYSRLINGLYKRQLLLNRKILAQIAISNRNCLYMISNEIIKEVGWKESTG.

The protein belongs to the bacterial ribosomal protein bL20 family.

Its subcellular location is the plastid. The protein localises to the chloroplast. In terms of biological role, binds directly to 23S ribosomal RNA and is necessary for the in vitro assembly process of the 50S ribosomal subunit. It is not involved in the protein synthesizing functions of that subunit. This is Large ribosomal subunit protein bL20c from Lactuca sativa (Garden lettuce).